A 161-amino-acid polypeptide reads, in one-letter code: Nucleotide-binding protein Plav_2177 (161 aa).

It belongs to the YajQ family.

Functionally, nucleotide-binding protein. The protein is Nucleotide-binding protein Plav_2177 of Parvibaculum lavamentivorans (strain DS-1 / DSM 13023 / NCIMB 13966).